We begin with the raw amino-acid sequence, 190 residues long: GTP cyclohydrolase 1 (190 aa).

Cysteine 80, histidine 83, and cysteine 151 together coordinate Zn(2+).

This sequence belongs to the GTP cyclohydrolase I family. Toroid-shaped homodecamer, composed of two pentamers of five dimers.

The catalysed reaction is GTP + H2O = 7,8-dihydroneopterin 3'-triphosphate + formate + H(+). The protein operates within cofactor biosynthesis; 7,8-dihydroneopterin triphosphate biosynthesis; 7,8-dihydroneopterin triphosphate from GTP: step 1/1. This Rickettsia akari (strain Hartford) protein is GTP cyclohydrolase 1.